The sequence spans 284 residues: RNA polymerase sigma factor RpoH (284 aa).

The interval 53-122 is sigma-70 factor domain-2; that stretch reads LILSHLRFVV…IHEYVLRNWR (70 aa). The Interaction with polymerase core subunit RpoC motif lies at 77–80; it reads DLIQ. Residues 228–280 form a sigma-70 factor domain-4 region; the sequence is AMQGLDERSQDIIRARWLDEDNKSTLQELADRYGVSAERVRQLEKNAMKKLRA. Positions 253 to 272 form a DNA-binding region, H-T-H motif; that stretch reads LQELADRYGVSAERVRQLEK.

This sequence belongs to the sigma-70 factor family. RpoH subfamily. As to quaternary structure, interacts with the RNA polymerase core enzyme.

The protein resides in the cytoplasm. Functionally, sigma factors are initiation factors that promote the attachment of RNA polymerase to specific initiation sites and are then released. This sigma factor is involved in regulation of expression of heat shock genes. The polypeptide is RNA polymerase sigma factor RpoH (Escherichia coli O6:H1 (strain CFT073 / ATCC 700928 / UPEC)).